We begin with the raw amino-acid sequence, 264 residues long: Putative serine carboxypeptidase-like 53 (264 aa).

The signal sequence occupies residues 1–23; the sequence is MGKLQDWSITTCLFLFFLHASQT. N-linked (GlcNAc...) asparagine glycosylation is found at asparagine 65, asparagine 101, asparagine 153, and asparagine 184.

Belongs to the peptidase S10 family.

It localises to the secreted. In Arabidopsis thaliana (Mouse-ear cress), this protein is Putative serine carboxypeptidase-like 53 (SCPL53).